Reading from the N-terminus, the 330-residue chain is MSQWHHPRSGWGRRRDFSGRSSAKKKGGNHIPERWKDYLPVGQRMPGTRFIAFKVPLQKSFEKKLAPEECFSPLDLFNKIREQNEELGLIIDLTYTQRYYKPEDLPETVPYLKIFTVGHQVPDDETIFKFKHAVNGFLKENKDNDKLIGVHCTHGLNRTGYLICRYLIDVEGVRPDDAIELFNRCRGHCLERQNYIEDLQNGPIRKNWNSSVPRSSDFEDSAHLMQPVHNKPVKQGPRYNLHQIQGHSAPRHFHTQTQSLQQSVRKFSENPHVYQRHHLPPPGPPGEDYSHRRYSWNVKPNASRAAQDRRRWYPYNYSRLSYPACWEWTQ.

Residues 1 to 12 (MSQWHHPRSGWG) show a composition bias toward basic residues. Residues 1–32 (MSQWHHPRSGWGRRRDFSGRSSAKKKGGNHIP) are disordered. A Tyrosine-protein phosphatase domain is found at 61-208 (FEKKLAPEEC…LQNGPIRKNW (148 aa)). Residue Cys152 is the Phosphocysteine intermediate of the active site. 153 to 158 (THGLNR) provides a ligand contact to substrate. Residue Arg158 is the Proton donor/acceptor of the active site.

The protein belongs to the protein-tyrosine phosphatase family. Non-receptor class dual specificity subfamily. Monomer. May interact with SFRS7 and SFRS9/SRP30C.

The protein localises to the nucleus. It localises to the nucleus speckle. Functionally, possesses RNA 5'-triphosphatase and diphosphatase activities, but displays a poor protein-tyrosine phosphatase activity. In addition, has phosphatase activity with ATP, ADP and O-methylfluorescein phosphate (in vitro). Binds to RNA. May participate in nuclear mRNA metabolism. The polypeptide is RNA/RNP complex-1-interacting phosphatase (Homo sapiens (Human)).